Here is a 372-residue protein sequence, read N- to C-terminus: UDP-N-acetylglucosamine--N-acetylmuramyl-(pentapeptide) pyrophosphoryl-undecaprenol N-acetylglucosamine transferase (372 aa).

UDP-N-acetyl-alpha-D-glucosamine is bound by residues 15–17 (TGG), asparagine 126, arginine 169, serine 197, and glutamine 299.

The protein belongs to the glycosyltransferase 28 family. MurG subfamily.

Its subcellular location is the cell inner membrane. The catalysed reaction is di-trans,octa-cis-undecaprenyl diphospho-N-acetyl-alpha-D-muramoyl-L-alanyl-D-glutamyl-meso-2,6-diaminopimeloyl-D-alanyl-D-alanine + UDP-N-acetyl-alpha-D-glucosamine = di-trans,octa-cis-undecaprenyl diphospho-[N-acetyl-alpha-D-glucosaminyl-(1-&gt;4)]-N-acetyl-alpha-D-muramoyl-L-alanyl-D-glutamyl-meso-2,6-diaminopimeloyl-D-alanyl-D-alanine + UDP + H(+). It functions in the pathway cell wall biogenesis; peptidoglycan biosynthesis. Its function is as follows. Cell wall formation. Catalyzes the transfer of a GlcNAc subunit on undecaprenyl-pyrophosphoryl-MurNAc-pentapeptide (lipid intermediate I) to form undecaprenyl-pyrophosphoryl-MurNAc-(pentapeptide)GlcNAc (lipid intermediate II). This is UDP-N-acetylglucosamine--N-acetylmuramyl-(pentapeptide) pyrophosphoryl-undecaprenol N-acetylglucosamine transferase from Methylobacterium sp. (strain 4-46).